A 212-amino-acid polypeptide reads, in one-letter code: Large ribosomal subunit protein bL25 (212 aa).

The protein belongs to the bacterial ribosomal protein bL25 family. CTC subfamily. As to quaternary structure, part of the 50S ribosomal subunit; part of the 5S rRNA/L5/L18/L25 subcomplex. Contacts the 5S rRNA. Binds to the 5S rRNA independently of L5 and L18.

Its function is as follows. This is one of the proteins that binds to the 5S RNA in the ribosome where it forms part of the central protuberance. This chain is Large ribosomal subunit protein bL25, found in Leptospira interrogans serogroup Icterohaemorrhagiae serovar copenhageni (strain Fiocruz L1-130).